Reading from the N-terminus, the 216-residue chain is Heart- and neural crest derivatives-expressed protein 2 (216 aa).

The segment at 74-115 is disordered; sequence MDHSHYGGVPPGSGPPGLGGPRPVKRRGTANRKERRRTQSIN. The span at 82 to 93 shows a compositional bias: gly residues; the sequence is VPPGSGPPGLGG. The segment covering 96–111 has biased composition (basic residues); that stretch reads PVKRRGTANRKERRRT. The bHLH domain occupies 98–150; the sequence is KRRGTANRKERRRTQSINSAFAELRECIPNVPADTKLSKIKTLRLATSYIAYL.

As to quaternary structure, efficient DNA binding requires dimerization with another bHLH protein.

It is found in the nucleus. Essential for cardiac morphogenesis. Binds DNA on E-box consensus sequence 5'-CANNTG-3'. Plays an important role in limb development, particularly in the establishment of anterior-posterior polarization of the limb bud. The sequence is that of Heart- and neural crest derivatives-expressed protein 2 (HAND2) from Gallus gallus (Chicken).